Reading from the N-terminus, the 341-residue chain is Glyceraldehyde-3-phosphate dehydrogenase 1 (341 aa).

Residues 13-14 (RI), aspartate 35, and lysine 85 contribute to the NAD(+) site. Residues 157–159 (SCT), threonine 188, 217–218 (TG), and arginine 240 contribute to the D-glyceraldehyde 3-phosphate site. Cysteine 158 serves as the catalytic Nucleophile. Residue asparagine 322 coordinates NAD(+).

The protein belongs to the glyceraldehyde-3-phosphate dehydrogenase family. In terms of assembly, homotetramer.

The protein resides in the cytoplasm. The enzyme catalyses D-glyceraldehyde 3-phosphate + phosphate + NAD(+) = (2R)-3-phospho-glyceroyl phosphate + NADH + H(+). It functions in the pathway carbohydrate degradation; glycolysis; pyruvate from D-glyceraldehyde 3-phosphate: step 1/5. This is Glyceraldehyde-3-phosphate dehydrogenase 1 (gpd-1) from Caenorhabditis elegans.